Here is a 222-residue protein sequence, read N- to C-terminus: PKHD-type hydroxylase Syncc9902_2001 (222 aa).

The Fe2OG dioxygenase domain occupies 80–174 (RVHSILISRS…RLVCVGWIES (95 aa)). 3 residues coordinate Fe cation: histidine 98, aspartate 100, and histidine 155. 2-oxoglutarate is bound at residue arginine 165.

Fe(2+) is required as a cofactor. The cofactor is L-ascorbate.

The sequence is that of PKHD-type hydroxylase Syncc9902_2001 from Synechococcus sp. (strain CC9902).